The sequence spans 205 residues: Protein-L-isoaspartate O-methyltransferase (205 aa).

The active site involves Ser52.

This sequence belongs to the methyltransferase superfamily. L-isoaspartyl/D-aspartyl protein methyltransferase family.

It is found in the cytoplasm. It carries out the reaction [protein]-L-isoaspartate + S-adenosyl-L-methionine = [protein]-L-isoaspartate alpha-methyl ester + S-adenosyl-L-homocysteine. Functionally, catalyzes the methyl esterification of L-isoaspartyl residues in peptides and proteins that result from spontaneous decomposition of normal L-aspartyl and L-asparaginyl residues. It plays a role in the repair and/or degradation of damaged proteins. This is Protein-L-isoaspartate O-methyltransferase from Gloeobacter violaceus (strain ATCC 29082 / PCC 7421).